The following is a 350-amino-acid chain: DNA polymerase IV (350 aa).

The region spanning 5 to 181 is the UmuC domain; that stretch reads IMHYDMDAFY…KKIKIIPGVG (177 aa). Mg(2+) is bound by residues Asp9 and Asp99. Residue Glu100 is part of the active site.

The protein belongs to the DNA polymerase type-Y family. Monomer. Requires Mg(2+) as cofactor.

Its subcellular location is the cytoplasm. The catalysed reaction is DNA(n) + a 2'-deoxyribonucleoside 5'-triphosphate = DNA(n+1) + diphosphate. Poorly processive, error-prone DNA polymerase involved in untargeted mutagenesis. Copies undamaged DNA at stalled replication forks, which arise in vivo from mismatched or misaligned primer ends. These misaligned primers can be extended by PolIV. Exhibits no 3'-5' exonuclease (proofreading) activity. May be involved in translesional synthesis, in conjunction with the beta clamp from PolIII. The chain is DNA polymerase IV from Fusobacterium nucleatum subsp. nucleatum (strain ATCC 25586 / DSM 15643 / BCRC 10681 / CIP 101130 / JCM 8532 / KCTC 2640 / LMG 13131 / VPI 4355).